The sequence spans 1187 residues: DNA-directed RNA polymerase subunit beta (1187 aa).

Residues 1150-1187 (KDEDDDPASSADDLGFNIGARPDAAAKEDQKAEEPEYQ) form a disordered region. Basic and acidic residues predominate over residues 1173–1187 (AAAKEDQKAEEPEYQ).

It belongs to the RNA polymerase beta chain family. The RNAP catalytic core consists of 2 alpha, 1 beta, 1 beta' and 1 omega subunit. When a sigma factor is associated with the core the holoenzyme is formed, which can initiate transcription.

The catalysed reaction is RNA(n) + a ribonucleoside 5'-triphosphate = RNA(n+1) + diphosphate. Its function is as follows. DNA-dependent RNA polymerase catalyzes the transcription of DNA into RNA using the four ribonucleoside triphosphates as substrates. The polypeptide is DNA-directed RNA polymerase subunit beta (Bifidobacterium longum (strain NCC 2705)).